The chain runs to 44 residues: Cytochrome b559 subunit beta (44 aa).

The helical transmembrane segment at 19–35 threads the bilayer; that stretch reads WLAVHTLAVPTVFFIGA. His23 contributes to the heme binding site.

This sequence belongs to the PsbE/PsbF family. In terms of assembly, heterodimer of an alpha subunit and a beta subunit. PSII is composed of 1 copy each of membrane proteins PsbA, PsbB, PsbC, PsbD, PsbE, PsbF, PsbH, PsbI, PsbJ, PsbK, PsbL, PsbM, PsbT, PsbX, PsbY, PsbZ, Psb30/Ycf12, peripheral proteins PsbO, CyanoQ (PsbQ), PsbU, PsbV and a large number of cofactors. It forms dimeric complexes. The cofactor is heme b.

The protein localises to the cellular thylakoid membrane. This b-type cytochrome is tightly associated with the reaction center of photosystem II (PSII). PSII is a light-driven water:plastoquinone oxidoreductase that uses light energy to abstract electrons from H(2)O, generating O(2) and a proton gradient subsequently used for ATP formation. It consists of a core antenna complex that captures photons, and an electron transfer chain that converts photonic excitation into a charge separation. This chain is Cytochrome b559 subunit beta, found in Gloeothece citriformis (strain PCC 7424) (Cyanothece sp. (strain PCC 7424)).